Consider the following 156-residue polypeptide: Small ribosomal subunit protein uS7 (156 aa).

Belongs to the universal ribosomal protein uS7 family. Part of the 30S ribosomal subunit. Contacts proteins S9 and S11.

Its function is as follows. One of the primary rRNA binding proteins, it binds directly to 16S rRNA where it nucleates assembly of the head domain of the 30S subunit. Is located at the subunit interface close to the decoding center, probably blocks exit of the E-site tRNA. This Mycoplasmopsis synoviae (strain 53) (Mycoplasma synoviae) protein is Small ribosomal subunit protein uS7.